The sequence spans 327 residues: Pyruvate dehydrogenase E1 component subunit beta (327 aa).

A thiamine diphosphate-binding site is contributed by E63.

As to quaternary structure, heterodimer of an alpha and a beta chain. Thiamine diphosphate is required as a cofactor.

The catalysed reaction is N(6)-[(R)-lipoyl]-L-lysyl-[protein] + pyruvate + H(+) = N(6)-[(R)-S(8)-acetyldihydrolipoyl]-L-lysyl-[protein] + CO2. Functionally, the pyruvate dehydrogenase complex catalyzes the overall conversion of pyruvate to acetyl-CoA and CO(2). It contains multiple copies of three enzymatic components: pyruvate dehydrogenase (E1), dihydrolipoamide acetyltransferase (E2) and lipoamide dehydrogenase (E3). This chain is Pyruvate dehydrogenase E1 component subunit beta (pdhB), found in Mycoplasma pneumoniae (strain ATCC 29342 / M129 / Subtype 1) (Mycoplasmoides pneumoniae).